We begin with the raw amino-acid sequence, 962 residues long: MLPLQGFNMTYPRKGVMPYPSTFLYREEPSVSTTECCCCWLCRLLCCCSTVDSQTALRDRMNASQPPPGGGGRLPDEVYRKIKAVDQGQSTLTQSGIQGLSARTLDENQRGDLVFQLVEIIKKPGQSLGLYLREGNGKDRSDGVFVSRFGDNSELAKSFLMSIDDVVLILSIPRRLLLRIRFSKSMRHEVITSRSSERPVVVFHKYDDRRDSETNAPILSQPTSTANTWLGKKSRQQMEEMRNATTTSTMRAAHASTSSPRNHFAPRLVNGHSQPIGVPSASSASTSDHHYQRFASEPSDSVSRTARVPPPRLASATVRRTESFNSAPGVSSSAPMYTLPRSSTAVPPPDIIGSIPHSARDPLMRSDLPYDPLTGRLSSSVPTDPLLSRSLCSPILPRTLRQPNDSNKSNSLPRRRIMTGGRNVKWRNDVVSTSDLCGEESDGAISAPEYSSPPFSRLTQQQQFRLSNGSPGRTVNDIFSAAEYRNWAGPYDPRGMYGPYPPGQRTTRWSHTYGEQRAPRTSSLPGRTVLAQSLVGSPVLPRHPPPIVQDRPSAVFDRYHVSPLMNRRAPLRAAGPGINVDRLSVSSLTGILYVHILEGRGLKIPEKQKGLTEEMYCVLEVDEQHRARTGVSTIEQKFKWRETFHIDVVNATVSNFFVYSWHPQFRHKLCHKGSLKLLEAFVVDQLNDDRVFALNLEPRGQLIVRIGFHDLQAVFRRTVNPRLNGVFGVPLGRLVQRERRDTPIVLTRLIQEIEKRGVDLSGLYVLCGSVEKKKMLRAQLESNPLGTDLNAENIPDTNVIACLIKDFLRELPEPLISPQIHGMLLEAATVALPNDVQANRTLVLKIIDCLQLSAKNCLLLVLDHLSTILCSSPHNGLTPTRLSLIFAPLLFFCLDAISPYTTSPTSKMAAVRSLDMNQASSSLQMILSIWPSRVNSESGSDSPATSGQKGGGGVSYVSESQC.

3 disordered regions span residues 231–367 (GKKS…MRSD), 397–419 (PRTL…RIMT), and 437–471 (CGEE…NGSP). Composition is skewed to polar residues over residues 243–261 (NATT…SSPR), 323–345 (SFNS…SSTA), 401–412 (RQPNDSNKSNSL), and 453–471 (PPFS…NGSP). The C2 domain occupies 572-696 (RAAGPGINVD…NDDRVFALNL (125 aa)). A Rho-GAP domain is found at 729 to 923 (VPLGRLVQRE…LDMNQASSSL (195 aa)). Polar residues predominate over residues 934-947 (VNSESGSDSPATSG). Positions 934 to 962 (VNSESGSDSPATSGQKGGGGVSYVSESQC) are disordered.

Its subcellular location is the synapse. Probable GTPase activator for the Rho-type GTPases by converting them to an inactive GDP-bound state. Regulates the localization and assembly of presynaptic components during presynaptic development and is required for specifying the identity of axons during initial polarity acquisition. In these roles it is thought to act cell autonomously downstream of syg-1 and syg-2 and upstream of syd-2, possibly as a positive regulator of the latter. Required for the control of movement, egg-laying and the correct localization of elks-1. This chain is Rho GTPase-activating protein syd-1, found in Caenorhabditis briggsae.